An 88-amino-acid chain; its full sequence is Small ribosomal subunit protein bS16 (88 aa).

This sequence belongs to the bacterial ribosomal protein bS16 family.

This chain is Small ribosomal subunit protein bS16, found in Geobacter metallireducens (strain ATCC 53774 / DSM 7210 / GS-15).